Reading from the N-terminus, the 439-residue chain is Methylenetetrahydrofolate--tRNA-(uracil-5-)-methyltransferase TrmFO (439 aa).

8 to 13 (GGGLAG) contributes to the FAD binding site.

The protein belongs to the MnmG family. TrmFO subfamily. FAD is required as a cofactor.

It localises to the cytoplasm. It carries out the reaction uridine(54) in tRNA + (6R)-5,10-methylene-5,6,7,8-tetrahydrofolate + NADH + H(+) = 5-methyluridine(54) in tRNA + (6S)-5,6,7,8-tetrahydrofolate + NAD(+). The catalysed reaction is uridine(54) in tRNA + (6R)-5,10-methylene-5,6,7,8-tetrahydrofolate + NADPH + H(+) = 5-methyluridine(54) in tRNA + (6S)-5,6,7,8-tetrahydrofolate + NADP(+). Catalyzes the folate-dependent formation of 5-methyl-uridine at position 54 (M-5-U54) in all tRNAs. The chain is Methylenetetrahydrofolate--tRNA-(uracil-5-)-methyltransferase TrmFO from Dictyoglomus turgidum (strain DSM 6724 / Z-1310).